A 247-amino-acid chain; its full sequence is tRNA (guanine-N(1)-)-methyltransferase (247 aa).

G126 contacts S-adenosyl-L-methionine.

This sequence belongs to the RNA methyltransferase TrmD family. As to quaternary structure, homodimer.

The protein resides in the cytoplasm. It carries out the reaction guanosine(37) in tRNA + S-adenosyl-L-methionine = N(1)-methylguanosine(37) in tRNA + S-adenosyl-L-homocysteine + H(+). Functionally, specifically methylates guanosine-37 in various tRNAs. In Jannaschia sp. (strain CCS1), this protein is tRNA (guanine-N(1)-)-methyltransferase.